The sequence spans 743 residues: Putative cation exchanger C3A12.06c (743 aa).

Helical transmembrane passes span 13-33 (LILLWCILGIAYILFWTHRIS), 109-129 (FPVLSIIVGWLIFLFITIGIS), 138-158 (LVTISWLLQLPDSVVGVTFLA), 182-202 (IGELLGSAFFIVAIVAGSVCL), 213-233 (FLRDVAFLTGTILLVIMFVLH), 239-258 (IWQSLVMILYYLLYVLFVFF), 528-548 (LRLLQCVFVPFAFVTFSITGG), 551-571 (LYIYAASSVFSILCITALYYY), 580-600 (FLPWVSFIGFVLGIIWISTIA), 609-629 (ALGVIFNLNESILGLTVFAAG), 649-669 (MAMGGVFGGPTLNILIGIGIS), 690-710 (LSITAYFLLACLLLLLIYVPL), and 718-738 (VLGLLLFILYIVGTSTNIVVE).

This sequence belongs to the Ca(2+):cation antiporter (CaCA) (TC 2.A.19) family.

It localises to the endoplasmic reticulum membrane. Putative cation exchanger. The protein is Putative cation exchanger C3A12.06c of Schizosaccharomyces pombe (strain 972 / ATCC 24843) (Fission yeast).